Reading from the N-terminus, the 536-residue chain is Copine-1 (536 aa).

2 consecutive C2 domains span residues 1–113 and 122–244; these read MAHC…TLPL and GRGT…ECIH. Positions 21, 27, 79, 81, 91, 152, and 158 each coordinate Ca(2+). N6-acetyllysine is present on Lys-170. 3 residues coordinate Ca(2+): Asp-213, Asp-215, and Asp-221. One can recognise a VWFA domain in the interval 282-484; the sequence is QINFTVGVDF…AARDIVQFVP (203 aa).

The protein belongs to the copine family. In terms of assembly, homodimer; homodimerizes via its C2 domains. Interacts with p65/RELA (via N-terminus); this interaction induces proteolytic cleavage of p65/RELA subunit and inhibition of NF-kappa-B transcriptional activity. Interacts (via VWFA domain) with ACTB, CCDC22, MYCBP2, PPP5C, RDX and UBE2O. It depends on Ca(2+) as a cofactor. Expressed in liver, brain, heart, intestine, kidney and lung (at protein level).

Its subcellular location is the nucleus. The protein localises to the cytoplasm. The protein resides in the cell membrane. Its function is as follows. Calcium-dependent phospholipid-binding protein that plays a role in calcium-mediated intracellular processes. Involved in the TNF-alpha receptor signaling pathway in a calcium-dependent manner. Exhibits calcium-dependent phospholipid binding properties. Plays a role in neuronal progenitor cell differentiation; induces neurite outgrowth via a AKT-dependent signaling cascade and calcium-independent manner. May recruit target proteins to the cell membrane in a calcium-dependent manner. May function in membrane trafficking. Involved in TNF-alpha-induced NF-kappa-B transcriptional repression by inducing endoprotease processing of the transcription factor NF-kappa-B p65/RELA subunit. Also induces endoprotease processing of NF-kappa-B p50/NFKB1, p52/NFKB2, RELB and REL. In Rattus norvegicus (Rat), this protein is Copine-1.